Consider the following 409-residue polypeptide: Nucleoprotein (409 aa).

Disordered regions lie at residues 1–32 (MASGKTTGKTDAPAPVIKLGGPKPPKVGSSGN), 44–63 (LNSPPPKFEGSGVPDNENLK), 120–145 (GADTKSRSNQGTRDPDKFDQYPLRFS), and 164–193 (RSGRSTAASSAASSRAPSRDGSRGRRSGAE). Over residues 15 to 31 (PVIKLGGPKPPKVGSSG) the composition is skewed to low complexity. The RNA-binding stretch occupies residues 29–160 (SSGNASWFQA…GNFRWDFIPI (132 aa)). One can recognise a CoV N NTD domain in the interval 31-156 (GNASWFQALK…GGPDGNFRWD (126 aa)). The segment covering 164-179 (RSGRSTAASSAASSRA) has biased composition (low complexity). Residues 180-192 (PSRDGSRGRRSGA) are compositionally biased toward basic and acidic residues. S190 carries the phosphoserine; by host modification. One can recognise a CoV N CTD domain in the interval 215-331 (TKAKADEMAH…QCVDGVGTRP (117 aa)). Positions 226–333 (RYCKRTIPPG…VDGVGTRPKD (108 aa)) are dimerization. An intrachain disulfide couples C320 to C323. The interval 326–409 (GVGTRPKDDE…GDSALGENEL (84 aa)) is disordered. The segment covering 341–355 (RPNSRPATRTSSPAP) has biased composition (polar residues). Residues 358-367 (QRQKKEKKSK) show a composition bias toward basic residues. The segment covering 368-384 (KQDDEVDKALTSDEERN) has biased composition (basic and acidic residues). T378 is subject to Phosphothreonine; by host. The residue at position 379 (S379) is a Phosphoserine; by host.

Belongs to the gammacoronavirus nucleocapsid protein family. In terms of assembly, homooligomer. Both monomeric and oligomeric forms interact with RNA. Interacts with protein M. Interacts with NSP3; this interaction serves to tether the genome to the newly translated replicase-transcriptase complex at a very early stage of infection. Post-translationally, ADP-ribosylated. The ADP-ribosylation is retained in the virion during infection. Phosphorylated on serine and threonine residues.

It is found in the virion. The protein resides in the host endoplasmic reticulum-Golgi intermediate compartment. It localises to the host Golgi apparatus. In terms of biological role, packages the positive strand viral genome RNA into a helical ribonucleocapsid (RNP) and plays a fundamental role during virion assembly through its interactions with the viral genome and membrane protein M. Plays an important role in enhancing the efficiency of subgenomic viral RNA transcription as well as viral replication. The polypeptide is Nucleoprotein (Avian infectious bronchitis virus (strain H120) (IBV)).